The primary structure comprises 716 residues: Ciliary WD repeat-containing protein ctxp80 (716 aa).

A disordered region spans residues 1–53 (MGCGGSSGASDPSSEKINWNNAEIHDEFKQEQKKAGAKRKAFDKTTGKAVEKE). Polar residues predominate over residues 8–21 (GASDPSSEKINWNN). A compositionally biased stretch (basic and acidic residues) spans 23 to 53 (EIHDEFKQEQKKAGAKRKAFDKTTGKAVEKE). WD repeat units follow at residues 167-208 (YHTN…KKGR), 213-254 (KGGR…QVKK), 257-297 (SGPD…FKKK), 305-343 (GKPT…STYD), 345-382 (HGKG…AEKT), 424-462 (HSDG…STAL), 529-568 (DSGE…KLGT), 571-610 (AHNS…QDPS), 639-678 (TDGT…GATP), and 683-715 (GHSE…QWKK).

The protein belongs to the WD repeat EMAP family.

This Euplotoides octocarinatus (Freshwater ciliate) protein is Ciliary WD repeat-containing protein ctxp80.